The sequence spans 51 residues: Small ribosomal subunit protein eS31 (51 aa).

4 residues coordinate Zn(2+): Cys21, Cys24, Cys39, and Cys42. The segment at 21 to 42 adopts a C4-type zinc-finger fold; sequence CVRCSNGVFMADHGDRYACGKC.

This sequence belongs to the eukaryotic ribosomal protein eS31 family. Part of the 30S ribosomal subunit. Zn(2+) is required as a cofactor.

This is Small ribosomal subunit protein eS31 from Methanothermobacter thermautotrophicus (strain ATCC 29096 / DSM 1053 / JCM 10044 / NBRC 100330 / Delta H) (Methanobacterium thermoautotrophicum).